A 439-amino-acid chain; its full sequence is Skin secretory protein xP2 (439 aa).

A signal peptide spans 1-22; it reads MNHKLFCVHFLLLILSVCYIQG. A disordered region spans residues 25-351; sequence AGGEPAPAEG…VEVGPKTEDC (327 aa). Tandem repeats lie at residues 26–33, 34–41, 42–51, 52–59, and 60–69. The 33 X approximate repeats of G-G(0,1)-[EV](0,1)-A-P-[A-P](1,3)-A-E stretch occupies residues 26 to 343; it reads GGEPAPAEGV…APAPAPAPVE (318 aa). Residues 26–345 show a composition bias toward low complexity; it reads GGEPAPAEGV…APAPAPVEVG (320 aa). The stretch at 70–77 is one 6; approximate repeat; that stretch reads GAEPAPAD. A run of 9 repeats spans residues 78–87, 88–97, 98–107, 108–115, 116–125, 126–135, 136–145, 146–153, and 154–163. A 16; approximate repeat occupies 164 to 173; that stretch reads VEAPAPAPAE. 14 tandem repeats follow at residues 174–183, 184–193, 194–203, 204–215, 216–225, 226–235, 236–245, 246–255, 256–265, 266–275, 276–285, 286–293, 294–303, and 304–313. The 31; approximate repeat unit spans residues 314-321; it reads GGAPSPAE. One copy of the 32; approximate repeat lies at 322–331; the sequence is GGAPAAAPAE. The 33; approximate repeat unit spans residues 332–343; that stretch reads GGAPAPAPAPVE. P-type domains are found at residues 349-392 and 396-439; these read EDCK…FFPR and AQCL…FHQK. 6 cysteine pairs are disulfide-bonded: Cys-351–Cys-377, Cys-361–Cys-376, Cys-371–Cys-388, Cys-398–Cys-424, Cys-408–Cys-423, and Cys-418–Cys-435.

Skin.

The protein localises to the secreted. Its function is as follows. May act as a growth factor in the germinal layer of the epidermis. May also be involved in growth of regenerating glands and in protection of the skin from the external environment. The protein is Skin secretory protein xP2 (p2) of Xenopus laevis (African clawed frog).